The primary structure comprises 839 residues: Translation initiation factor IF-2 (839 aa).

2 stretches are compositionally biased toward basic and acidic residues: residues Met1–Lys12 and Ala57–Ala67. 2 disordered regions span residues Met1–Lys21 and Ala57–Leu244. Positions Glu68–Thr90 are enriched in low complexity. Composition is skewed to basic and acidic residues over residues Pro104–Thr167, Arg185–Arg199, and Gly212–Gly233. Residues Thr338–Thr508 enclose the tr-type G domain. The tract at residues Gly347–Thr354 is G1. Gly347–Thr354 is a GTP binding site. Residues Gly372 to His376 are G2. Residues Asp394 to Gly397 are G3. GTP-binding positions include Asp394 to His398 and Asn448 to Asp451. Residues Asn448–Asp451 are G4. Positions Ser484–Lys486 are G5.

The protein belongs to the TRAFAC class translation factor GTPase superfamily. Classic translation factor GTPase family. IF-2 subfamily.

The protein resides in the cytoplasm. Functionally, one of the essential components for the initiation of protein synthesis. Protects formylmethionyl-tRNA from spontaneous hydrolysis and promotes its binding to the 30S ribosomal subunits. Also involved in the hydrolysis of GTP during the formation of the 70S ribosomal complex. The sequence is that of Translation initiation factor IF-2 from Haemophilus ducreyi (strain 35000HP / ATCC 700724).